The following is a 313-amino-acid chain: Methionyl-tRNA formyltransferase (313 aa).

Position 113 to 116 (113 to 116) interacts with (6S)-5,6,7,8-tetrahydrofolate; the sequence is SLLP.

Belongs to the Fmt family.

The catalysed reaction is L-methionyl-tRNA(fMet) + (6R)-10-formyltetrahydrofolate = N-formyl-L-methionyl-tRNA(fMet) + (6S)-5,6,7,8-tetrahydrofolate + H(+). Functionally, attaches a formyl group to the free amino group of methionyl-tRNA(fMet). The formyl group appears to play a dual role in the initiator identity of N-formylmethionyl-tRNA by promoting its recognition by IF2 and preventing the misappropriation of this tRNA by the elongation apparatus. This Francisella tularensis subsp. mediasiatica (strain FSC147) protein is Methionyl-tRNA formyltransferase.